The chain runs to 862 residues: Protein translocase subunit SecA (862 aa).

ATP is bound by residues Gln88, 106 to 110 (GEGKT), and Asp506. Positions 839, 841, 850, and 851 each coordinate Zn(2+).

This sequence belongs to the SecA family. As to quaternary structure, monomer and homodimer. Part of the essential Sec protein translocation apparatus which comprises SecA, SecYEG and auxiliary proteins SecDF-YajC and YidC. It depends on Zn(2+) as a cofactor.

Its subcellular location is the cell inner membrane. The protein resides in the cytoplasm. It catalyses the reaction ATP + H2O + cellular proteinSide 1 = ADP + phosphate + cellular proteinSide 2.. In terms of biological role, part of the Sec protein translocase complex. Interacts with the SecYEG preprotein conducting channel. Has a central role in coupling the hydrolysis of ATP to the transfer of proteins into and across the cell membrane, serving as an ATP-driven molecular motor driving the stepwise translocation of polypeptide chains across the membrane. This chain is Protein translocase subunit SecA, found in Campylobacter jejuni (strain RM1221).